The sequence spans 81 residues: Photosystem I iron-sulfur center (81 aa).

2 4Fe-4S ferredoxin-type domains span residues 2–31 and 39–68; these read AHSVKIYATCIGCTQCVRACPTDVLEMVPW and IASAPRTEDCVGCKRCESACPTDFLSVRVY. Cysteine 11, cysteine 14, cysteine 17, cysteine 21, cysteine 48, cysteine 51, cysteine 54, and cysteine 58 together coordinate [4Fe-4S] cluster.

As to quaternary structure, the eukaryotic PSI reaction center is composed of at least 11 subunits. [4Fe-4S] cluster serves as cofactor.

The protein resides in the plastid. It is found in the chloroplast thylakoid membrane. The enzyme catalyses reduced [plastocyanin] + hnu + oxidized [2Fe-2S]-[ferredoxin] = oxidized [plastocyanin] + reduced [2Fe-2S]-[ferredoxin]. Functionally, apoprotein for the two 4Fe-4S centers FA and FB of photosystem I (PSI); essential for photochemical activity. FB is the terminal electron acceptor of PSI, donating electrons to ferredoxin. The C-terminus interacts with PsaA/B/D and helps assemble the protein into the PSI complex. Required for binding of PsaD and PsaE to PSI. PSI is a plastocyanin-ferredoxin oxidoreductase, converting photonic excitation into a charge separation, which transfers an electron from the donor P700 chlorophyll pair to the spectroscopically characterized acceptors A0, A1, FX, FA and FB in turn. The polypeptide is Photosystem I iron-sulfur center (Mesostigma viride (Green alga)).